Here is a 193-residue protein sequence, read N- to C-terminus: dCTP deaminase, dUMP-forming (193 aa).

Residues 101 to 106, Asp119, 127 to 129, Gln148, Tyr162, and Gln174 each bind dCTP; these read KSSLGR and TLE. Glu129 serves as the catalytic Proton donor/acceptor.

Belongs to the dCTP deaminase family. Homotrimer.

It catalyses the reaction dCTP + 2 H2O = dUMP + NH4(+) + diphosphate. The protein operates within pyrimidine metabolism; dUMP biosynthesis; dUMP from dCTP: step 1/1. In terms of biological role, bifunctional enzyme that catalyzes both the deamination of dCTP to dUTP and the hydrolysis of dUTP to dUMP without releasing the toxic dUTP intermediate. In Bifidobacterium adolescentis (strain ATCC 15703 / DSM 20083 / NCTC 11814 / E194a), this protein is dCTP deaminase, dUMP-forming.